Here is a 71-residue protein sequence, read N- to C-terminus: Small integral membrane protein 31 (71 aa).

The chain crosses the membrane as a helical span at residues 8-28 (LEMAFILLAFVIFSLFTLASI). A disordered region spans residues 31 to 71 (TPDDSNEEEEHEKKGREKKRKKSEKKKNCSEEEHRIEAVEL). The span at 46 to 55 (REKKRKKSEK) shows a compositional bias: basic residues. The span at 56-71 (KKNCSEEEHRIEAVEL) shows a compositional bias: basic and acidic residues. Asparagine 58 carries N-linked (GlcNAc...) asparagine glycosylation.

It is found in the membrane. The polypeptide is Small integral membrane protein 31 (Homo sapiens (Human)).